A 350-amino-acid chain; its full sequence is Bifunctional methylenetetrahydrofolate dehydrogenase/cyclohydrolase, mitochondrial (350 aa).

The transit peptide at 1-35 (MAATSLMSALAARLLQPAHSCSLRLRPFHLAAVRN) directs the protein to the mitochondrion. Position 50 is an N6-acetyllysine; alternate (K50). Residue K50 forms a Glycyl lysine isopeptide (Lys-Gly) (interchain with G-Cter in SUMO2); alternate linkage. Substrate is bound by residues 84-88 (YVLNK) and 131-133 (VQL). NAD(+) contacts are provided by residues 200–202 (GRS) and R233. Substrate is bound at residue 309–313 (PGGVG).

Belongs to the tetrahydrofolate dehydrogenase/cyclohydrolase family. In terms of assembly, homodimer. Mg(2+) is required as a cofactor.

The protein resides in the mitochondrion. It catalyses the reaction (6R)-5,10-methylene-5,6,7,8-tetrahydrofolate + NAD(+) = (6R)-5,10-methenyltetrahydrofolate + NADH. The catalysed reaction is (6R)-5,10-methenyltetrahydrofolate + H2O = (6R)-10-formyltetrahydrofolate + H(+). Functionally, although its dehydrogenase activity is NAD-specific, it can also utilize NADP at a reduced efficiency. The protein is Bifunctional methylenetetrahydrofolate dehydrogenase/cyclohydrolase, mitochondrial (MTHFD2) of Homo sapiens (Human).